The chain runs to 707 residues: Prolyl endopeptidase-like (707 aa).

Catalysis depends on charge relay system residues Ser538, Asp624, and His670.

The protein belongs to the peptidase S9A family. As to quaternary structure, homodimer.

Its subcellular location is the cytoplasm. The protein resides in the cytosol. Functionally, serine peptidase whose precise substrate specificity remains unclear. Does not cleave peptides after a arginine or lysine residue. Regulates trans-Golgi network morphology and sorting by regulating the membrane binding of the AP-1 complex. May play a role in the regulation of synaptic vesicle exocytosis. This is Prolyl endopeptidase-like (prepl) from Xenopus laevis (African clawed frog).